We begin with the raw amino-acid sequence, 146 residues long: ATP synthase epsilon chain (146 aa).

It belongs to the ATPase epsilon chain family. In terms of assembly, F-type ATPases have 2 components, CF(1) - the catalytic core - and CF(0) - the membrane proton channel. CF(1) has five subunits: alpha(3), beta(3), gamma(1), delta(1), epsilon(1). CF(0) has three main subunits: a, b and c.

The protein localises to the cell membrane. Produces ATP from ADP in the presence of a proton gradient across the membrane. The protein is ATP synthase epsilon chain of Lactobacillus helveticus (strain DPC 4571).